The following is an 837-amino-acid chain: Protein translocase subunit SecA (837 aa).

ATP is bound by residues Q85, 103–107, and D493; that span reads GEGKT. Residues C821, C823, C832, and H833 each contribute to the Zn(2+) site.

It belongs to the SecA family. Monomer and homodimer. Part of the essential Sec protein translocation apparatus which comprises SecA, SecYEG and auxiliary proteins SecDF. Other proteins may also be involved. Requires Zn(2+) as cofactor.

The protein localises to the cell membrane. It localises to the cytoplasm. It catalyses the reaction ATP + H2O + cellular proteinSide 1 = ADP + phosphate + cellular proteinSide 2.. In terms of biological role, part of the Sec protein translocase complex. Interacts with the SecYEG preprotein conducting channel. Has a central role in coupling the hydrolysis of ATP to the transfer of proteins into and across the cell membrane, serving as an ATP-driven molecular motor driving the stepwise translocation of polypeptide chains across the membrane. In Streptococcus pneumoniae (strain Taiwan19F-14), this protein is Protein translocase subunit SecA.